We begin with the raw amino-acid sequence, 485 residues long: Hexokinase (485 aa).

Serine 15 bears the Phosphoserine mark. In terms of domain architecture, Hexokinase spans 21 to 468; the sequence is ANLMEQIHGL…SGVGAAIIAC (448 aa). The segment at 75 to 208 is hexokinase small subdomain; the sequence is TGKETGDFLA…NIPINVVALI (134 aa). Lysine 111 serves as a coordination point for ATP. Residues 151-177 form a glucose-binding region; that stretch reads PLGFTFSYPASQKKINSGVLQRWTKGF. Residues 209–457 are hexokinase large subdomain; sequence NDTTGTLVAS…HPIQLVAAED (249 aa).

As to quaternary structure, monomer and homodimer. The monomeric form is active, the homodimeric form inactive.

It carries out the reaction a D-hexose + ATP = a D-hexose 6-phosphate + ADP + H(+). It catalyses the reaction D-fructose + ATP = D-fructose 6-phosphate + ADP + H(+). The catalysed reaction is D-glucose + ATP = D-glucose 6-phosphate + ADP + H(+). It participates in carbohydrate metabolism; hexose metabolism. The protein operates within carbohydrate degradation; glycolysis; D-glyceraldehyde 3-phosphate and glycerone phosphate from D-glucose: step 1/4. In terms of biological role, catalyzes the phosphorylation of hexose, such as D-glucose and D-fructose, to hexose 6-phosphate (D-glucose 6-phosphate and D-fructose 6-phosphate, respectively). Has higher affinity for D-glucose. Mediates the initial step of glycolysis by catalyzing phosphorylation of D-glucose to D-glucose 6-phosphate. This chain is Hexokinase (RAG5), found in Kluyveromyces lactis (strain ATCC 8585 / CBS 2359 / DSM 70799 / NBRC 1267 / NRRL Y-1140 / WM37) (Yeast).